The sequence spans 700 residues: Elongation factor G (700 aa).

The region spanning 10–286 (KKVRNIGIMA…AVIDYLPSPL (277 aa)) is the tr-type G domain. GTP is bound by residues 19–26 (AHIDAGKT), 83–87 (DTPGH), and 137–140 (NKMD).

Belongs to the TRAFAC class translation factor GTPase superfamily. Classic translation factor GTPase family. EF-G/EF-2 subfamily.

It is found in the cytoplasm. Its function is as follows. Catalyzes the GTP-dependent ribosomal translocation step during translation elongation. During this step, the ribosome changes from the pre-translocational (PRE) to the post-translocational (POST) state as the newly formed A-site-bound peptidyl-tRNA and P-site-bound deacylated tRNA move to the P and E sites, respectively. Catalyzes the coordinated movement of the two tRNA molecules, the mRNA and conformational changes in the ribosome. The polypeptide is Elongation factor G (Nocardia farcinica (strain IFM 10152)).